The sequence spans 77 residues: UPF0349 protein lwe2340 (77 aa).

Belongs to the UPF0349 family.

In Listeria welshimeri serovar 6b (strain ATCC 35897 / DSM 20650 / CCUG 15529 / CIP 8149 / NCTC 11857 / SLCC 5334 / V8), this protein is UPF0349 protein lwe2340.